The chain runs to 464 residues: Na(+)/H(+) antiporter NhaA (464 aa).

Helical transmembrane passes span 37-57 (GSGILLVFLTIVALVFANTSC), 82-102 (IHYWINDALMTLFFLMVGLEI), 118-138 (VLPIFAALGGMIVPALIYFSF), 145-165 (VSGWGIPMATDIAFAIAILLL), 176-196 (AVLVALAIVDDLGAVIVIAIF), 200-220 (NLAWSPLIAAFLCFAVLLLLN), 226-246 (ALWAYIAIGSLMWVFMLFSGV), 248-268 (ATVAGVLTALATPMNAVYSPT), 321-341 (ILNTPVYFLIVPLFVLFNAGV), 360-380 (VFFGLVFGKLIGVVSAIMICV), 396-416 (VLGIGMLAGIGFTMSIFVSEL), and 430-450 (ITILAASLTAATLGYCWLRFI).

This sequence belongs to the NhaA Na(+)/H(+) (TC 2.A.33) antiporter family.

It localises to the cell inner membrane. It catalyses the reaction Na(+)(in) + 2 H(+)(out) = Na(+)(out) + 2 H(+)(in). Its function is as follows. Na(+)/H(+) antiporter that extrudes sodium in exchange for external protons. The protein is Na(+)/H(+) antiporter NhaA of Dichelobacter nodosus (strain VCS1703A).